The following is a 730-amino-acid chain: Polyribonucleotide nucleotidyltransferase (730 aa).

D494 and D500 together coordinate Mg(2+). The 62-residue stretch at 561-622 (PRIQTIQIDP…EAMNRAIQEI (62 aa)) folds into the KH domain. Residues 642 to 711 (GKIYTGRVTG…RSGKVRLSRK (70 aa)) form the S1 motif domain.

Belongs to the polyribonucleotide nucleotidyltransferase family. Requires Mg(2+) as cofactor.

Its subcellular location is the cytoplasm. The catalysed reaction is RNA(n+1) + phosphate = RNA(n) + a ribonucleoside 5'-diphosphate. Involved in mRNA degradation. Catalyzes the phosphorolysis of single-stranded polyribonucleotides processively in the 3'- to 5'-direction. The polypeptide is Polyribonucleotide nucleotidyltransferase (Opitutus terrae (strain DSM 11246 / JCM 15787 / PB90-1)).